Here is a 167-residue protein sequence, read N- to C-terminus: MLFDLKLLEDKRGKVSEIKGSIIKSLDILENKRIISVGDRVTRELLGSGRRPEVAIIDLKERREMNCSTIFYLDDYLILVARNPAGTLMREAWLKVRKAIEISLSGKNAAVIVDGEEDLLGFPAIILPPEGWVMVYGQPGVGMVSVNIDRKAREEAMNLLQEAFLPI.

The GTP site is built by Asp39, Val41, Asp58, Lys60, and Glu117.

This sequence belongs to the GTP-dependent DPCK family.

The catalysed reaction is 3'-dephospho-CoA + GTP = GDP + CoA + H(+). The protein operates within cofactor biosynthesis; coenzyme A biosynthesis. In terms of biological role, catalyzes the GTP-dependent phosphorylation of the 3'-hydroxyl group of dephosphocoenzyme A to form coenzyme A (CoA). The protein is GTP-dependent dephospho-CoA kinase of Korarchaeum cryptofilum (strain OPF8).